Reading from the N-terminus, the 298-residue chain is Lipoyl synthase (298 aa).

The [4Fe-4S] cluster site is built by cysteine 40, cysteine 45, cysteine 51, cysteine 67, cysteine 71, cysteine 74, and serine 280. One can recognise a Radical SAM core domain in the interval 53–269 (AVRKTATFMI…KEIALSKGFS (217 aa)).

Belongs to the radical SAM superfamily. Lipoyl synthase family. The cofactor is [4Fe-4S] cluster.

The protein localises to the cytoplasm. The catalysed reaction is [[Fe-S] cluster scaffold protein carrying a second [4Fe-4S](2+) cluster] + N(6)-octanoyl-L-lysyl-[protein] + 2 oxidized [2Fe-2S]-[ferredoxin] + 2 S-adenosyl-L-methionine + 4 H(+) = [[Fe-S] cluster scaffold protein] + N(6)-[(R)-dihydrolipoyl]-L-lysyl-[protein] + 4 Fe(3+) + 2 hydrogen sulfide + 2 5'-deoxyadenosine + 2 L-methionine + 2 reduced [2Fe-2S]-[ferredoxin]. It functions in the pathway protein modification; protein lipoylation via endogenous pathway; protein N(6)-(lipoyl)lysine from octanoyl-[acyl-carrier-protein]. Its function is as follows. Catalyzes the radical-mediated insertion of two sulfur atoms into the C-6 and C-8 positions of the octanoyl moiety bound to the lipoyl domains of lipoate-dependent enzymes, thereby converting the octanoylated domains into lipoylated derivatives. The protein is Lipoyl synthase of Bacillus cereus (strain ATCC 10987 / NRS 248).